We begin with the raw amino-acid sequence, 602 residues long: Sodium- and chloride-dependent GABA transporter 2 (602 aa).

Topologically, residues 1 to 40 are cytoplasmic; that stretch reads MDNRVSGTTSNGETKPVCPVMEKVEEDGTLEREQWTNKME. The next 3 helical transmembrane spans lie at 41 to 61, 68 to 88, and 121 to 141; these read FVLS…FPYL, GAFF…VFFL, and IVSL…FYLF. Residues 142–206 lie on the Extracellular side of the membrane; it reads SSFTTDLPWG…GIQHLGSLRW (65 aa). A disulfide bridge links cysteine 153 with cysteine 162. Residues asparagine 169, asparagine 173, and asparagine 178 are each glycosylated (N-linked (GlcNAc...) asparagine). A run of 2 helical transmembrane segments spans residues 207 to 227 and 233 to 253; these read ELVL…WKGV and VVYF…IRGV. A glycan (N-linked (GlcNAc...) asparagine) is linked at asparagine 269. The next 7 membrane-spanning stretches (helical) occupy residues 282–302, 319–339, 366–386, 418–438, 453–473, 490–510, and 528–548; these read AGTQ…ALGS, ILNS…LGFM, VVML…VVLL, ILIL…LTEG, GMCL…VYGA, PLIK…TFLF, and WWGD…IPAW. The Cytoplasmic portion of the chain corresponds to 549 to 602; it reads SIYKLRTLKGPLRERLRQLVCPAEDLPQKSQPELTSPATPMTSLLRLTELESNC. Threonine 587 carries the phosphothreonine modification. Serine 591 is modified (phosphoserine).

This sequence belongs to the sodium:neurotransmitter symporter (SNF) (TC 2.A.22) family. SLC6A13 subfamily. As to expression, brain, retina, and peripheral tissues. Expressed in hepatocytes (at protein level).

The protein localises to the cell membrane. Its subcellular location is the basolateral cell membrane. It catalyses the reaction 4-aminobutanoate(out) + chloride(out) + 2 Na(+)(out) = 4-aminobutanoate(in) + chloride(in) + 2 Na(+)(in). The catalysed reaction is taurine(out) + chloride(out) + 2 Na(+)(out) = taurine(in) + chloride(in) + 2 Na(+)(in). The enzyme catalyses beta-alanine(out) + chloride(out) + 2 Na(+)(out) = beta-alanine(in) + chloride(in) + 2 Na(+)(in). It carries out the reaction hypotaurine(out) + chloride(out) + 2 Na(+)(out) = hypotaurine(in) + chloride(in) + 2 Na(+)(in). With respect to regulation, GABA transport is inhibited by beta-alanine, L-2,4-Diaminobutyric acid, hypotaurine and nipecotic acid. Taurine transport is inhibited by hypotaurine, beta-alanine and nipecotic acid. Its function is as follows. Mediates sodium- and chloride-dependent transport of gamma-aminobutyric acid (GABA). Mediates transport of taurine and is the major taurine transporter in hepatocytes. Can also mediate transport of beta-alanine and hypotaurine. In Rattus norvegicus (Rat), this protein is Sodium- and chloride-dependent GABA transporter 2 (Slc6a13).